The primary structure comprises 178 residues: Large ribosomal subunit protein uL6 (178 aa).

The span at 155 to 169 (PYKGKGIKYDNEQIR) shows a compositional bias: basic and acidic residues. The interval 155–178 (PYKGKGIKYDNEQIRRKAGKSGGK) is disordered.

Belongs to the universal ribosomal protein uL6 family. As to quaternary structure, part of the 50S ribosomal subunit.

Its function is as follows. This protein binds to the 23S rRNA, and is important in its secondary structure. It is located near the subunit interface in the base of the L7/L12 stalk, and near the tRNA binding site of the peptidyltransferase center. The polypeptide is Large ribosomal subunit protein uL6 (Nitratidesulfovibrio vulgaris (strain DSM 19637 / Miyazaki F) (Desulfovibrio vulgaris)).